A 391-amino-acid polypeptide reads, in one-letter code: Elongation factor Tu 2 (391 aa).

The region spanning 10–201 is the tr-type G domain; it reads KPHVNIGTIG…EVDRYIPTPE (192 aa). Residues 19-26 form a G1 region; the sequence is GHVDHGKT. 19–26 contacts GTP; that stretch reads GHVDHGKT. Position 26 (T26) interacts with Mg(2+). The interval 55-59 is G2; the sequence is GITIS. The segment at 76 to 79 is G3; the sequence is DCPG. GTP contacts are provided by residues 76–80 and 131–134; these read DCPGH and NKVD. Positions 131–134 are G4; sequence NKVD. Residues 169 to 171 are G5; sequence SAL.

Belongs to the TRAFAC class translation factor GTPase superfamily. Classic translation factor GTPase family. EF-Tu/EF-1A subfamily. As to quaternary structure, monomer.

Its subcellular location is the cytoplasm. The enzyme catalyses GTP + H2O = GDP + phosphate + H(+). Functionally, GTP hydrolase that promotes the GTP-dependent binding of aminoacyl-tRNA to the A-site of ribosomes during protein biosynthesis. This Bartonella bacilliformis (strain ATCC 35685 / KC583 / Herrer 020/F12,63) protein is Elongation factor Tu 2.